The primary structure comprises 358 residues: Trans-enoyl reductase pvhC (358 aa).

48–51 (VDSK) lines the NADP(+) pocket. 134-141 (ISFLTSGL) contributes to the substrate binding site. NADP(+) is bound by residues 169 to 172 (SSSC), 192 to 195 (SPHN), tyrosine 210, and 257 to 258 (LE). Position 278–282 (278–282 (GPSLL)) interacts with substrate. An NADP(+)-binding site is contributed by 347–348 (VS).

The protein belongs to the zinc-containing alcohol dehydrogenase family. Monomer.

It functions in the pathway secondary metabolite biosynthesis. Functionally, trans-enoyl reductase; part of the gene cluster that mediates the biosynthesis of varicidin A, an antifungal natural product containing a cis-octahydrodecalin core. The PKS module of pvhA together with the enoylreductase pvhC catalyze the formation of the polyketide unit which is then conjugated to L-isoleucine by the condensation domain of the NRPS module. Activity of the Dieckmann cyclase domain (RED) of pvhA results in release of an acyclic tetramate. The cytochrome P450 monooxygenase pvhE then catalyzes the oxidation of the C21 methyl group to a to carboxylate group. The methyltransferase pvhD then further methylates the pvhE product. The Diels-Alderase pvhB is able to catalyze Diels-Alder cycloaddition using both pvhE and pvhD products as substrates to form the decalin ring, yielding varicidin B and A, respectively. This Talaromyces variabilis (Penicillium variabile) protein is Trans-enoyl reductase pvhC.